Reading from the N-terminus, the 622-residue chain is Apical membrane antigen 1 (622 aa).

An N-terminal signal peptide occupies residues 1 to 24; the sequence is MRKLYCVLLLSAFEFTYMINFGRG. Residues 25 to 546 are Extracellular-facing; sequence QNYWEHPYQN…EHKPTYDNMK (522 aa). 5 cysteine pairs are disulfide-bonded: C149–C302, C217–C247, C263–C275, C320–C418, and C337–C409. N286, N371, N421, N422, and N499 each carry an N-linked (GlcNAc...) asparagine glycan. Disulfide bonds link C443–C502, C490–C507, and C492–C509. The helical transmembrane segment at 547-567 threads the bilayer; the sequence is IIIASSAAVAVLATILMVYLY. The Cytoplasmic portion of the chain corresponds to 568–622; sequence KRKGNAEKYDKMDEPQDYGKSTSRNDEMLDPEASFWGEEKRASHTTPVLMEKPYY. The tract at residues 577–607 is disordered; it reads DKMDEPQDYGKSTSRNDEMLDPEASFWGEEK.

Belongs to the apicomplexan parasites AMA1 family.

Its subcellular location is the membrane. Its function is as follows. Involved in parasite invasion of erythrocytes. The sequence is that of Apical membrane antigen 1 (AMA-1) from Plasmodium falciparum (isolate thtn / Thailand).